We begin with the raw amino-acid sequence, 229 residues long: Protein fmp52-2, mitochondrial (229 aa).

The N-terminal 45 residues, 1 to 45 (MTTAAVFGSTGAVGGQILATLLASDAFSSVKTVSRRLPNAQSPKL), are a transit peptide targeting the mitochondrion.

Belongs to the FMP52 family.

The protein resides in the mitochondrion outer membrane. In Aspergillus oryzae (strain ATCC 42149 / RIB 40) (Yellow koji mold), this protein is Protein fmp52-2, mitochondrial (fmp522).